The sequence spans 417 residues: NADH-quinone oxidoreductase subunit D (417 aa).

The protein belongs to the complex I 49 kDa subunit family. As to quaternary structure, NDH-1 is composed of 14 different subunits. Subunits NuoB, C, D, E, F, and G constitute the peripheral sector of the complex.

Its subcellular location is the cell inner membrane. It carries out the reaction a quinone + NADH + 5 H(+)(in) = a quinol + NAD(+) + 4 H(+)(out). Functionally, NDH-1 shuttles electrons from NADH, via FMN and iron-sulfur (Fe-S) centers, to quinones in the respiratory chain. The immediate electron acceptor for the enzyme in this species is believed to be ubiquinone. Couples the redox reaction to proton translocation (for every two electrons transferred, four hydrogen ions are translocated across the cytoplasmic membrane), and thus conserves the redox energy in a proton gradient. The chain is NADH-quinone oxidoreductase subunit D from Legionella pneumophila (strain Corby).